The following is a 184-amino-acid chain: Ribosome maturation factor RimM (184 aa).

One can recognise a PRC barrel domain in the interval 111–184 (DDEFYWVDLI…HIVVDWGLDY (74 aa)).

The protein belongs to the RimM family. Binds ribosomal protein uS19.

Its subcellular location is the cytoplasm. In terms of biological role, an accessory protein needed during the final step in the assembly of 30S ribosomal subunit, possibly for assembly of the head region. Essential for efficient processing of 16S rRNA. May be needed both before and after RbfA during the maturation of 16S rRNA. It has affinity for free ribosomal 30S subunits but not for 70S ribosomes. The polypeptide is Ribosome maturation factor RimM (Ralstonia nicotianae (strain ATCC BAA-1114 / GMI1000) (Ralstonia solanacearum)).